The chain runs to 436 residues: Methionine aminopeptidase 2 (436 aa).

The tract at residues 1–61 is disordered; sequence MSEIQPKTEV…KKKKAAPVAS (61 aa). A compositionally biased stretch (acidic residues) spans 16-26; it reads EEEEESDDEED. Residues 44–56 show a composition bias toward basic residues; it reads KKKKKKNKKKKKA. His191 is a substrate binding site. 3 residues coordinate a divalent metal cation: Asp211, Asp222, and His291. His299 lines the substrate pocket. Residues Glu324 and Glu417 each contribute to the a divalent metal cation site.

It belongs to the peptidase M24A family. Methionine aminopeptidase eukaryotic type 2 subfamily. Requires Co(2+) as cofactor. Zn(2+) is required as a cofactor. It depends on Mn(2+) as a cofactor. Fe(2+) serves as cofactor.

It is found in the cytoplasm. It carries out the reaction Release of N-terminal amino acids, preferentially methionine, from peptides and arylamides.. Its function is as follows. Cotranslationally removes the N-terminal methionine from nascent proteins. The N-terminal methionine is often cleaved when the second residue in the primary sequence is small and uncharged (Met-Ala-, Cys, Gly, Pro, Ser, Thr, or Val). This is Methionine aminopeptidase 2 (metap2) from Dictyostelium discoideum (Social amoeba).